Consider the following 181-residue polypeptide: Adenylate kinase (181 aa).

10–15 (GAGKGT) is an ATP binding site. Residues 30–59 (STGDLFRANISQQTPLGREAQKYMDAGDLV) form an NMP region. AMP is bound by residues Thr-31, Arg-36, 57–59 (DLV), 85–88 (GYPR), and Gln-92. The segment at 126–132 (ARGRNDD) is LID. Arg-127 serves as a coordination point for ATP. Residues Arg-129 and Arg-140 each contribute to the AMP site. Gly-166 lines the ATP pocket.

Belongs to the adenylate kinase family. In terms of assembly, monomer.

The protein localises to the cytoplasm. It carries out the reaction AMP + ATP = 2 ADP. It functions in the pathway purine metabolism; AMP biosynthesis via salvage pathway; AMP from ADP: step 1/1. Its function is as follows. Catalyzes the reversible transfer of the terminal phosphate group between ATP and AMP. Plays an important role in cellular energy homeostasis and in adenine nucleotide metabolism. The sequence is that of Adenylate kinase from Nocardia farcinica (strain IFM 10152).